A 369-amino-acid chain; its full sequence is Methionine import ATP-binding protein MetN 1 (369 aa).

The disordered stretch occupies residues 1 to 26; the sequence is MTTMTVPPSLLPLEPFPTAPDTRAST. The ABC transporter domain maps to 29–265; that stretch reads IRLHGLGKRY…PRHAVTRSLL (237 aa). 62–69 lines the ATP pocket; it reads GRSGAGKS.

The protein belongs to the ABC transporter superfamily. Methionine importer (TC 3.A.1.24) family. The complex is composed of two ATP-binding proteins (MetN), two transmembrane proteins (MetI) and a solute-binding protein (MetQ).

The protein resides in the cell inner membrane. It carries out the reaction L-methionine(out) + ATP + H2O = L-methionine(in) + ADP + phosphate + H(+). The catalysed reaction is D-methionine(out) + ATP + H2O = D-methionine(in) + ADP + phosphate + H(+). Its function is as follows. Part of the ABC transporter complex MetNIQ involved in methionine import. Responsible for energy coupling to the transport system. The polypeptide is Methionine import ATP-binding protein MetN 1 (Pseudomonas aeruginosa (strain UCBPP-PA14)).